We begin with the raw amino-acid sequence, 239 residues long: Cysteine-rich venom protein kaouthin-1 (239 aa).

Positions 1–18 (MIAFSLLCLAAVLRQSFG) are cleaved as a signal peptide. In terms of domain architecture, SCP spans 37–165 (VDLHNSLRRR…AWSYFYVCQY (129 aa)). Cystine bridges form between cysteine 74–cysteine 152, cysteine 91–cysteine 166, cysteine 147–cysteine 163, cysteine 185–cysteine 192, cysteine 188–cysteine 197, cysteine 201–cysteine 234, cysteine 210–cysteine 228, and cysteine 219–cysteine 232. The ShKT domain maps to 201-234 (CTIYNKLTNCDSLLKQGSCQDDWIKSNCPASCFC).

This sequence belongs to the CRISP family. Expressed by the venom gland.

The protein localises to the secreted. Functionally, inhibits calcium-activated potassium channels (KCa), voltage-gated potassium channel (Kv), and the calcium release channel/ryanodine receptor (RyR). This chain is Cysteine-rich venom protein kaouthin-1, found in Naja kaouthia (Monocled cobra).